An 85-amino-acid polypeptide reads, in one-letter code: Sec-independent protein translocase protein TatA (85 aa).

A helical transmembrane segment spans residues 1–21 (MGIFDWKHWLIILIVVVLVFG). Residues 43 to 85 (VNTEEGENRPAEPQTGTSAGDTLNKTQTIEGQAQKVDTPVRKD) are disordered. Positions 56–73 (QTGTSAGDTLNKTQTIEG) are enriched in polar residues.

Belongs to the TatA/E family. As to quaternary structure, the Tat system comprises two distinct complexes: a TatABC complex, containing multiple copies of TatA, TatB and TatC subunits, and a separate TatA complex, containing only TatA subunits. Substrates initially bind to the TatABC complex, which probably triggers association of the separate TatA complex to form the active translocon.

It localises to the cell inner membrane. Functionally, part of the twin-arginine translocation (Tat) system that transports large folded proteins containing a characteristic twin-arginine motif in their signal peptide across membranes. TatA could form the protein-conducting channel of the Tat system. The sequence is that of Sec-independent protein translocase protein TatA from Azotobacter vinelandii (strain DJ / ATCC BAA-1303).